Reading from the N-terminus, the 644-residue chain is Exoribonuclease 2 (644 aa).

One can recognise an RNB domain in the interval 189–516 (REDLTALNFV…NHRLLKAMIT (328 aa)). The S1 motif domain maps to 561–643 (DTRFTAEIID…ETRNVIARPV (83 aa)).

It belongs to the RNR ribonuclease family. RNase II subfamily.

The protein localises to the cytoplasm. It catalyses the reaction Exonucleolytic cleavage in the 3'- to 5'-direction to yield nucleoside 5'-phosphates.. Functionally, involved in mRNA degradation. Hydrolyzes single-stranded polyribonucleotides processively in the 3' to 5' direction. This Yersinia pestis bv. Antiqua (strain Antiqua) protein is Exoribonuclease 2.